A 208-amino-acid chain; its full sequence is Holliday junction resolvase RecU (208 aa).

A disordered region spans residues 1–28; it reads MNYPNGKPYSKNKPLDGRKSSPFSSNIE. Mg(2+)-binding residues include Thr-87, Asp-89, Glu-102, and Gln-121.

This sequence belongs to the RecU family. Requires Mg(2+) as cofactor.

Its subcellular location is the cytoplasm. The catalysed reaction is Endonucleolytic cleavage at a junction such as a reciprocal single-stranded crossover between two homologous DNA duplexes (Holliday junction).. Its function is as follows. Endonuclease that resolves Holliday junction intermediates in genetic recombination. Cleaves mobile four-strand junctions by introducing symmetrical nicks in paired strands. Promotes annealing of linear ssDNA with homologous dsDNA. Required for DNA repair, homologous recombination and chromosome segregation. The sequence is that of Holliday junction resolvase RecU from Staphylococcus epidermidis (strain ATCC 12228 / FDA PCI 1200).